We begin with the raw amino-acid sequence, 418 residues long: Voltage-gated ClC-type chloride channel ClcB (418 aa).

Residues 1 to 4 (MFRR) lie on the Cytoplasmic side of the membrane. The helical transmembrane segment at 5–25 (LLIATVVGILAVFAVAGFRHA) threads the bilayer. Over 26–53 (MLLLEWLFLNNDSGSLVNAATNLSSWRR) the chain is Periplasmic. The helical transmembrane segment at 54 to 74 (LLTPALGGLAAGLLLMGWQKF) threads the bilayer. The Cytoplasmic portion of the chain corresponds to 75–145 (TQQRPHAPTD…QRFTPRQEWK (71 aa)). Residues 146–166 (LWIACGAAAGMAAAYRAPLAG) form a helical membrane-spanning segment. At 167-172 (SLFIAE) the chain is on the periplasmic side. Residues 173–193 (VLFGTMMLASLGPVIISAIVA) form a helical membrane-spanning segment. Over 194-221 (WLVSNLINHSDALLYNVQLSVTVQARDY) the chain is Cytoplasmic. Residues 222–242 (ALIISTGVLAGLCGPLLLTLM) form a helical membrane-spanning segment. Residues 243–257 (NACHRGFVSLKLAPP) lie on the Periplasmic side of the membrane. Residues 258-278 (WQLALGGLIVGLLSLFTPAVW) form a helical membrane-spanning segment. Over 279–290 (GNGYSTVQSFLT) the chain is Cytoplasmic. Residues 291–311 (APPLLMIIAGIFLCKLCAVLA) traverse the membrane as a helical segment. At 312 to 315 (SSGS) the chain is on the periplasmic side. The chain crosses the membrane as a helical span at residues 316 to 336 (GAPGGVFTPTLFIGLAIGMLY). Over 337–351 (GRSLGLWFPDGEEIT) the chain is Cytoplasmic. Residues 352–372 (LLLGLTGMATLLAATTHAPIM) form a helical membrane-spanning segment. Residues 373-379 (STLMICE) are Periplasmic-facing. A helical membrane pass occupies residues 380-400 (MTGEYQLLPGLLIACVIASVI). The Cytoplasmic segment spans residues 401–418 (SRTLHRDSIYRQHTAQHS).

This sequence belongs to the chloride channel (TC 2.A.49) family. ClcB subfamily.

It is found in the cell inner membrane. Functionally, probably acts as an electrical shunt for an outwardly-directed proton pump that is linked to amino acid decarboxylation, as part of the extreme acid resistance (XAR) response. This chain is Voltage-gated ClC-type chloride channel ClcB (clcB), found in Shigella flexneri.